We begin with the raw amino-acid sequence, 868 residues long: LPS-assembly protein LptD (868 aa).

The signal sequence occupies residues 1–24; that stretch reads MLKGIHKYLLMCFGTVLFTVQANA.

Belongs to the LptD family. In terms of assembly, component of the lipopolysaccharide transport and assembly complex. Interacts with LptE and LptA.

It localises to the cell outer membrane. Its function is as follows. Together with LptE, is involved in the assembly of lipopolysaccharide (LPS) at the surface of the outer membrane. This Francisella tularensis subsp. tularensis (strain FSC 198) protein is LPS-assembly protein LptD.